We begin with the raw amino-acid sequence, 121 residues long: UPF0102 protein HRM2_30940 (121 aa).

The protein belongs to the UPF0102 family.

This is UPF0102 protein HRM2_30940 from Desulforapulum autotrophicum (strain ATCC 43914 / DSM 3382 / VKM B-1955 / HRM2) (Desulfobacterium autotrophicum).